Consider the following 499-residue polypeptide: Pentatricopeptide repeat-containing protein At5g61800 (499 aa).

10 PPR repeats span residues 78–113 (STFC…SVPP), 114–150 (DFHT…GLLS), 151–181 (DLFT…NPQR), 182–212 (DVVT…MPLR), 213–247 (DLVS…GLKP), 248–282 (DNVA…RLFI), 283–313 (DSFL…CSDK), 314–348 (TLFT…GIKP), 349–379 (DGVT…MRSL), and 385–419 (EMKH…GGNR). The tract at residues 424–499 (AWSGLLGGCR…KNVGFSKVLS (76 aa)) is type E motif.

The protein belongs to the PPR family. PCMP-E subfamily.

In Arabidopsis thaliana (Mouse-ear cress), this protein is Pentatricopeptide repeat-containing protein At5g61800 (PCMP-E8).